The sequence spans 123 residues: Fluoride-specific ion channel FluC (123 aa).

The next 4 helical transmembrane spans lie at 1–21 (MQWLAIGLGAAFGACLRGWLA), 32–52 (LGTLGANVLGGLLIGLALVWF), 66–86 (FVITGFLGGLTTFSTFSAEVF), and 94–114 (LLAALGLVGLHVGMTLLATAL). Positions 73 and 76 each coordinate Na(+).

The protein belongs to the fluoride channel Fluc/FEX (TC 1.A.43) family.

The protein resides in the cell inner membrane. The enzyme catalyses fluoride(in) = fluoride(out). With respect to regulation, na(+) is not transported, but it plays an essential structural role and its presence is essential for fluoride channel function. Fluoride-specific ion channel. Important for reducing fluoride concentration in the cell, thus reducing its toxicity. This chain is Fluoride-specific ion channel FluC, found in Psychrobacter arcticus (strain DSM 17307 / VKM B-2377 / 273-4).